A 431-amino-acid polypeptide reads, in one-letter code: Histidinol dehydrogenase (431 aa).

Residues Tyr127, Gln185, and Asn208 each coordinate NAD(+). Residues Ser234, Gln256, and His259 each contribute to the substrate site. Positions 256 and 259 each coordinate Zn(2+). Catalysis depends on proton acceptor residues Glu323 and His324. The substrate site is built by His324, Asp357, Glu411, and His416. Position 357 (Asp357) interacts with Zn(2+). Position 416 (His416) interacts with Zn(2+).

Belongs to the histidinol dehydrogenase family. Requires Zn(2+) as cofactor.

It carries out the reaction L-histidinol + 2 NAD(+) + H2O = L-histidine + 2 NADH + 3 H(+). It participates in amino-acid biosynthesis; L-histidine biosynthesis; L-histidine from 5-phospho-alpha-D-ribose 1-diphosphate: step 9/9. In terms of biological role, catalyzes the sequential NAD-dependent oxidations of L-histidinol to L-histidinaldehyde and then to L-histidine. The chain is Histidinol dehydrogenase from Vibrio vulnificus (strain YJ016).